The sequence spans 559 residues: MLISRQERARICSDSELGAGNLLARLKAYGRPLDEPVLRTDGTWRAPDGSRPEVLTLGELYAVVEAYAGWYAAHGVRPRDPVALHSSSSAEFAVNFLALTSLGAIPSFVNGNLAPETAREYVRRQGAVGAFTDESHREVLTDAGLGFHVTADAIRPEHRASLPASYPYRHDPTDPVLISHSSGTTGMPKGVPHTHRTLMYAQVHRLRYSTGTDMERTLVGLPGAHNAMVATLLYCLLLRTDIKLLSSQRGADVLDTVEEFRPTTVLAFAGTFGEMAAEDLTRRDLSSVQVWFNTGDAAHEAHIRALVAHGSHQKVDRDLRRVRVDGSVFVDGLGSSEAGYSVFHNRHTKDTDAYARRIGKPISFAEAAVLSEDGIPLPPGQIGRLGLKSPTLTPGYWNDSLTWNRMRLGGYWLTGDLAHQDEDGNFYHLDRAPDAVRTRAGIVFSTRTEELLLAELPELADCTVVGVAPDGVRADWDGDGEGEAYALLQVTDEGAADAADAAGGDEAWTERVNSVLTAAGYPPVHRALRMKPDDVAKGATGKVLKRVMRDRFAAEEQHA.

Ser-181 contributes to the Mg(2+) binding site. ATP-binding residues include Ala-227, Gly-332, and Ser-336. Position 337 (Glu-337) interacts with Mg(2+). Positions 416 and 437 each coordinate ATP.

Belongs to the ATP-dependent AMP-binding enzyme family. It depends on Mg(2+) as a cofactor.

It carries out the reaction 3-aminoavenalumate + nitrite + ATP = 3-diazoavenalumate + AMP + diphosphate + H2O. The catalysed reaction is (E)-3-aminocoumarate + nitrite + ATP + H(+) = (E)-3-diazocoumarate + AMP + diphosphate + H2O. It catalyses the reaction 3-amino-4-hydroxybenzoate + nitrite + ATP + H(+) = 3-diazo-4-hydroxybenzoate + AMP + diphosphate + H2O. In terms of biological role, ligase involved in the biosynthesis of avenalumic acid (AVA). Catalyzes the diazotization of 3-aminoavenalumic acid (3-AAA) to 3-diazoavenalumic acid (3-DAA). It can also act on 3-aminocoumaric acid (3-ACA) and 3-amino-4-hydroxybenzoic acid (3,4-AHBA) with lower activity. The chain is 3-aminoavenalumate diazotase from Streptomyces sp.